A 585-amino-acid chain; its full sequence is Acetolactate synthase large subunit (585 aa).

Glu-60 lines the thiamine diphosphate pocket. FAD contacts are provided by residues Arg-162, 272-293, and 315-334; these read HGTAYANFAVSECDLLIALGAR and DIDPAEIGKNRIPQLAIISD. The tract at residues 407-486 is thiamine pyrophosphate binding; that stretch reads QHQMWAAQFL…IKIFIINNQW (80 aa). 2 residues coordinate Mg(2+): Asp-457 and Asn-484.

Belongs to the TPP enzyme family. In terms of assembly, dimer of large and small chains. Mg(2+) serves as cofactor. Requires thiamine diphosphate as cofactor.

It localises to the plastid. Its subcellular location is the chloroplast. It carries out the reaction 2 pyruvate + H(+) = (2S)-2-acetolactate + CO2. Its pathway is amino-acid biosynthesis; L-isoleucine biosynthesis; L-isoleucine from 2-oxobutanoate: step 1/4. It participates in amino-acid biosynthesis; L-valine biosynthesis; L-valine from pyruvate: step 1/4. This is Acetolactate synthase large subunit (ilvB) from Cyanidium caldarium (Red alga).